A 366-amino-acid polypeptide reads, in one-letter code: Glutamate 5-kinase (366 aa).

Lysine 17 is a binding site for ATP. Substrate-binding residues include serine 57, aspartate 144, and asparagine 156. ATP contacts are provided by residues 176-177 (SD) and 216-222 (TGGMVSK). The 79-residue stretch at 278–356 (SGALTLDDGA…SDLPAEMRRP (79 aa)) folds into the PUA domain.

This sequence belongs to the glutamate 5-kinase family.

The protein resides in the cytoplasm. The enzyme catalyses L-glutamate + ATP = L-glutamyl 5-phosphate + ADP. The protein operates within amino-acid biosynthesis; L-proline biosynthesis; L-glutamate 5-semialdehyde from L-glutamate: step 1/2. Catalyzes the transfer of a phosphate group to glutamate to form L-glutamate 5-phosphate. This chain is Glutamate 5-kinase, found in Mycolicibacterium vanbaalenii (strain DSM 7251 / JCM 13017 / BCRC 16820 / KCTC 9966 / NRRL B-24157 / PYR-1) (Mycobacterium vanbaalenii).